We begin with the raw amino-acid sequence, 446 residues long: N-succinylarginine dihydrolase (446 aa).

Residues 19 to 28, Asn110, and 137 to 138 each bind substrate; these read AGLSFGNVAS and HR. Glu174 is a catalytic residue. Residue Arg213 coordinates substrate. His249 is a catalytic residue. Residues Asp251 and Asn364 each coordinate substrate. Cys370 acts as the Nucleophile in catalysis.

Belongs to the succinylarginine dihydrolase family. Homodimer.

The enzyme catalyses N(2)-succinyl-L-arginine + 2 H2O + 2 H(+) = N(2)-succinyl-L-ornithine + 2 NH4(+) + CO2. Its pathway is amino-acid degradation; L-arginine degradation via AST pathway; L-glutamate and succinate from L-arginine: step 2/5. Its function is as follows. Catalyzes the hydrolysis of N(2)-succinylarginine into N(2)-succinylornithine, ammonia and CO(2). In Burkholderia ambifaria (strain ATCC BAA-244 / DSM 16087 / CCUG 44356 / LMG 19182 / AMMD) (Burkholderia cepacia (strain AMMD)), this protein is N-succinylarginine dihydrolase.